A 463-amino-acid polypeptide reads, in one-letter code: ATP synthase subunit beta (463 aa).

152–159 (GGAGVGKT) is an ATP binding site.

It belongs to the ATPase alpha/beta chains family. F-type ATPases have 2 components, CF(1) - the catalytic core - and CF(0) - the membrane proton channel. CF(1) has five subunits: alpha(3), beta(3), gamma(1), delta(1), epsilon(1). CF(0) has three main subunits: a(1), b(2) and c(9-12). The alpha and beta chains form an alternating ring which encloses part of the gamma chain. CF(1) is attached to CF(0) by a central stalk formed by the gamma and epsilon chains, while a peripheral stalk is formed by the delta and b chains.

The protein localises to the cell membrane. The catalysed reaction is ATP + H2O + 4 H(+)(in) = ADP + phosphate + 5 H(+)(out). Its function is as follows. Produces ATP from ADP in the presence of a proton gradient across the membrane. The catalytic sites are hosted primarily by the beta subunits. The protein is ATP synthase subunit beta of Clostridium botulinum (strain Alaska E43 / Type E3).